Here is a 60-residue protein sequence, read N- to C-terminus: Large ribosomal subunit protein bL32 (60 aa).

The tract at residues 1-60 (MAVQQNKKSRSARDMRRSHDALEASTLSVEKSTGEVHLRHHVSPEGVYRGRKVIDKGADE) is disordered. A compositionally biased stretch (basic and acidic residues) spans 11 to 22 (SARDMRRSHDAL).

The protein belongs to the bacterial ribosomal protein bL32 family.

The chain is Large ribosomal subunit protein bL32 from Ectopseudomonas mendocina (strain ymp) (Pseudomonas mendocina).